The sequence spans 348 residues: Phosphate acyltransferase (348 aa).

Belongs to the PlsX family. Homodimer. Probably interacts with PlsY.

The protein resides in the cytoplasm. It catalyses the reaction a fatty acyl-[ACP] + phosphate = an acyl phosphate + holo-[ACP]. Its pathway is lipid metabolism; phospholipid metabolism. Functionally, catalyzes the reversible formation of acyl-phosphate (acyl-PO(4)) from acyl-[acyl-carrier-protein] (acyl-ACP). This enzyme utilizes acyl-ACP as fatty acyl donor, but not acyl-CoA. The protein is Phosphate acyltransferase of Neisseria gonorrhoeae (strain ATCC 700825 / FA 1090).